A 166-amino-acid chain; its full sequence is Crossover junction endodeoxyribonuclease RuvC (166 aa).

Residues Asp-7, Glu-67, and Asp-140 contribute to the active site. 3 residues coordinate Mg(2+): Asp-7, Glu-67, and Asp-140.

This sequence belongs to the RuvC family. As to quaternary structure, homodimer which binds Holliday junction (HJ) DNA. The HJ becomes 2-fold symmetrical on binding to RuvC with unstacked arms; it has a different conformation from HJ DNA in complex with RuvA. In the full resolvosome a probable DNA-RuvA(4)-RuvB(12)-RuvC(2) complex forms which resolves the HJ. The cofactor is Mg(2+).

It is found in the cytoplasm. It catalyses the reaction Endonucleolytic cleavage at a junction such as a reciprocal single-stranded crossover between two homologous DNA duplexes (Holliday junction).. The RuvA-RuvB-RuvC complex processes Holliday junction (HJ) DNA during genetic recombination and DNA repair. Endonuclease that resolves HJ intermediates. Cleaves cruciform DNA by making single-stranded nicks across the HJ at symmetrical positions within the homologous arms, yielding a 5'-phosphate and a 3'-hydroxyl group; requires a central core of homology in the junction. The consensus cleavage sequence is 5'-(A/T)TT(C/G)-3'. Cleavage occurs on the 3'-side of the TT dinucleotide at the point of strand exchange. HJ branch migration catalyzed by RuvA-RuvB allows RuvC to scan DNA until it finds its consensus sequence, where it cleaves and resolves the cruciform DNA. This chain is Crossover junction endodeoxyribonuclease RuvC, found in Brevibacillus brevis (strain 47 / JCM 6285 / NBRC 100599).